The sequence spans 169 residues: Peptide deformylase (169 aa).

Fe cation-binding residues include cysteine 91 and histidine 133. Residue glutamate 134 is part of the active site. Histidine 137 lines the Fe cation pocket.

This sequence belongs to the polypeptide deformylase family. Requires Fe(2+) as cofactor.

The enzyme catalyses N-terminal N-formyl-L-methionyl-[peptide] + H2O = N-terminal L-methionyl-[peptide] + formate. Removes the formyl group from the N-terminal Met of newly synthesized proteins. Requires at least a dipeptide for an efficient rate of reaction. N-terminal L-methionine is a prerequisite for activity but the enzyme has broad specificity at other positions. This is Peptide deformylase from Enterobacter sp. (strain 638).